We begin with the raw amino-acid sequence, 116 residues long: Large ribosomal subunit protein bL19 (116 aa).

This sequence belongs to the bacterial ribosomal protein bL19 family.

In terms of biological role, this protein is located at the 30S-50S ribosomal subunit interface and may play a role in the structure and function of the aminoacyl-tRNA binding site. The protein is Large ribosomal subunit protein bL19 of Pseudomonas fluorescens (strain ATCC BAA-477 / NRRL B-23932 / Pf-5).